Consider the following 375-residue polypeptide: Putative prophage phiRv2 integrase (375 aa).

A Core-binding (CB) domain is found at 75–153; sequence APFGEYAEGW…LLRAIMQTAL (79 aa). In terms of domain architecture, Tyr recombinase spans 175-364; it reads HKIRPATLDE…AKGRDREIAA (190 aa). Residues arginine 209, histidine 316, arginine 319, and histidine 342 contribute to the active site. The active-site O-(3'-phospho-DNA)-tyrosine intermediate is tyrosine 351.

It belongs to the 'phage' integrase family.

Integrase is necessary for integration of the phage into the host genome by site-specific recombination. In conjunction with excisionase, integrase is also necessary for excision of the prophage from the host genome. This chain is Putative prophage phiRv2 integrase, found in Mycobacterium tuberculosis (strain CDC 1551 / Oshkosh).